A 214-amino-acid chain; its full sequence is Adenylate kinase (214 aa).

10–15 (GAGKGT) is an ATP binding site. Residues 30-59 (STGDMFRAAIKEGTELGKQAKALMDEGKLV) are NMP. Residues Thr-31, Arg-36, 57–59 (KLV), 85–88 (GFPR), and Gln-92 each bind AMP. An LID region spans residues 122-159 (GRRVHQPSGRTYHVVYNPPKVEGKDDVTGEDLIIRQDD). ATP contacts are provided by residues Arg-123 and 132–133 (TY). The AMP site is built by Arg-156 and Arg-167. Lys-200 lines the ATP pocket.

It belongs to the adenylate kinase family. In terms of assembly, monomer.

Its subcellular location is the cytoplasm. The enzyme catalyses AMP + ATP = 2 ADP. Its pathway is purine metabolism; AMP biosynthesis via salvage pathway; AMP from ADP: step 1/1. Its function is as follows. Catalyzes the reversible transfer of the terminal phosphate group between ATP and AMP. Plays an important role in cellular energy homeostasis and in adenine nucleotide metabolism. This is Adenylate kinase from Actinobacillus pleuropneumoniae serotype 5b (strain L20).